Here is a 155-residue protein sequence, read N- to C-terminus: Transcriptional repressor NrdR (155 aa).

A zinc finger lies at 3–34; that stretch reads CPFCGNVDTQVKDSRPAEDHVAIRRRRFCPAC. The 91-residue stretch at 49-139 folds into the ATP-cone domain; that stretch reads LVVIKSSGKR…VYKNFQAADD (91 aa).

Belongs to the NrdR family. It depends on Zn(2+) as a cofactor.

Functionally, negatively regulates transcription of bacterial ribonucleotide reductase nrd genes and operons by binding to NrdR-boxes. The polypeptide is Transcriptional repressor NrdR (Dinoroseobacter shibae (strain DSM 16493 / NCIMB 14021 / DFL 12)).